Here is a 367-residue protein sequence, read N- to C-terminus: Putrescine-binding periplasmic protein SpuD (367 aa).

Positions 1 to 24 (MMKRFGKTLLALTLAGSVAGMAQA) are cleaved as a signal peptide. 36 to 37 (SD) provides a ligand contact to putrescine. Cysteine 173 and cysteine 236 are oxidised to a cystine. Positions 244 and 275 each coordinate putrescine.

It belongs to the bacterial solute-binding protein PotD/PotF family.

It localises to the periplasm. The protein resides in the secreted. Its function is as follows. Putrescine-binding protein probably required for putrescine uptake into cells. Binds putrescine with high affinity, spermidine with relatively low affinity. Does not bind cadaverine or spermine. Putrescine binding induces large inter-domain conformational changes. This chain is Putrescine-binding periplasmic protein SpuD (spuD), found in Pseudomonas aeruginosa (strain UCBPP-PA14).